A 222-amino-acid polypeptide reads, in one-letter code: V-type ATP synthase subunit D (222 aa).

The protein belongs to the V-ATPase D subunit family.

In terms of biological role, produces ATP from ADP in the presence of a proton gradient across the membrane. The protein is V-type ATP synthase subunit D of Deinococcus geothermalis (strain DSM 11300 / CIP 105573 / AG-3a).